We begin with the raw amino-acid sequence, 1003 residues long: Retinoblastoma-related protein 1 (1003 aa).

The segment at 405–607 (TPVSTAMTTA…EKGSSMYNSL (203 aa)) is domain A. Positions 405–860 (TPVSTAMTTA…NEMFIPSVKP (456 aa)) are pocket. Residues 608 to 729 (AVAKPSLAAE…PGGGGETCAE (122 aa)) form a spacer region. Residues 730 to 860 (TAINVFFGKI…NEMFIPSVKP (131 aa)) form a domain B region. Positions 868-899 (AGNNSEKNDHNDGQGPASPKPSPFPKLPDMSP) are disordered.

It belongs to the retinoblastoma protein (RB) family. Expressed in roots, stems, leaves and flowers.

The protein resides in the nucleus. Functionally, regulator of biological processes that recruits a histone deacetylase to control gene transcription. Formation of stable complexes with geminiviridae replication-associated proteins may create a cellular environment which favors viral DNA replication. May play a role in the entry into mitosis, negatively regulating the cell proliferation during leaf, stem, and flower development. Critical regulator of the endocycle. The chain is Retinoblastoma-related protein 1 (RBR1) from Nicotiana benthamiana.